A 419-amino-acid chain; its full sequence is Serine hydroxymethyltransferase (419 aa).

Residues Leu-121 and 125-127 each bind (6S)-5,6,7,8-tetrahydrofolate; that span reads GHL. Lys-229 bears the N6-(pyridoxal phosphate)lysine mark. Residue 354 to 356 coordinates (6S)-5,6,7,8-tetrahydrofolate; the sequence is SPF.

The protein belongs to the SHMT family. In terms of assembly, homodimer. Requires pyridoxal 5'-phosphate as cofactor.

The protein localises to the cytoplasm. It carries out the reaction (6R)-5,10-methylene-5,6,7,8-tetrahydrofolate + glycine + H2O = (6S)-5,6,7,8-tetrahydrofolate + L-serine. It functions in the pathway one-carbon metabolism; tetrahydrofolate interconversion. It participates in amino-acid biosynthesis; glycine biosynthesis; glycine from L-serine: step 1/1. Catalyzes the reversible interconversion of serine and glycine with tetrahydrofolate (THF) serving as the one-carbon carrier. This reaction serves as the major source of one-carbon groups required for the biosynthesis of purines, thymidylate, methionine, and other important biomolecules. Also exhibits THF-independent aldolase activity toward beta-hydroxyamino acids, producing glycine and aldehydes, via a retro-aldol mechanism. This Coxiella burnetii (strain RSA 331 / Henzerling II) protein is Serine hydroxymethyltransferase.